The chain runs to 344 residues: tRNA(Ile)-lysidine synthase (344 aa).

43 to 48 (SGGADS) contacts ATP.

The protein belongs to the tRNA(Ile)-lysidine synthase family.

The protein resides in the cytoplasm. It catalyses the reaction cytidine(34) in tRNA(Ile2) + L-lysine + ATP = lysidine(34) in tRNA(Ile2) + AMP + diphosphate + H(+). Functionally, ligates lysine onto the cytidine present at position 34 of the AUA codon-specific tRNA(Ile) that contains the anticodon CAU, in an ATP-dependent manner. Cytidine is converted to lysidine, thus changing the amino acid specificity of the tRNA from methionine to isoleucine. In Bordetella parapertussis (strain 12822 / ATCC BAA-587 / NCTC 13253), this protein is tRNA(Ile)-lysidine synthase.